Consider the following 448-residue polypeptide: Beta-alanine--pyruvate aminotransferase (448 aa).

Tryptophan 61 contributes to the substrate binding site. 120–121 (GS) contributes to the pyridoxal 5'-phosphate binding site. Lysine 288 carries the N6-(pyridoxal phosphate)lysine modification. Threonine 327 lines the pyridoxal 5'-phosphate pocket. Substrate is bound by residues arginine 414 and glutamine 421.

The protein belongs to the class-III pyridoxal-phosphate-dependent aminotransferase family. As to quaternary structure, homotetramer. It depends on pyridoxal 5'-phosphate as a cofactor.

It catalyses the reaction 3-oxopropanoate + L-alanine = beta-alanine + pyruvate. Its activity is regulated as follows. Inhibited by gabaculine (5-amino-1,3-cyclohexadienylcarboxylic acid). In terms of biological role, involved in the degradation of beta-alanine. Catalyzes the transfer of the amino group from beta-alanine to pyruvate to yield L-alanine and 3-oxopropanoate. It can also accept both 4-aminobutyrate and (S)-alpha-methylbenzylamine (MBA) as amino-group donors in the presence of pyruvate as an amine acceptor. The sequence is that of Beta-alanine--pyruvate aminotransferase (bauA) from Pseudomonas aeruginosa (strain ATCC 15692 / DSM 22644 / CIP 104116 / JCM 14847 / LMG 12228 / 1C / PRS 101 / PAO1).